We begin with the raw amino-acid sequence, 63 residues long: Cecropin-B (63 aa).

The N-terminal stretch at 1 to 22 is a signal peptide; it reads MNFAKILSFVFALVLALSMTSA. Residues 23–26 constitute a propeptide, removed by a dipeptidylpeptidase; that stretch reads APEP. Lys47 carries the post-translational modification 5-hydroxylysine; partial. Isoleucine amide is present on Ile61.

This sequence belongs to the cecropin family. Post-translationally, lepidopteran-B differs from lepidopteran-A by its hydroxylated residue. In terms of tissue distribution, highest expression in fat body and hemocytes. Is also expressed in Malpighian tubules and to a much lesser extent in midgut. Not present in silk gland.

Its subcellular location is the secreted. Its function is as follows. Cecropins have lytic and antibacterial activity against several Gram-positive and Gram-negative bacteria. This is Cecropin-B (CECB1) from Bombyx mori (Silk moth).